The sequence spans 90 residues: Large ribosomal subunit protein eL34 (90 aa).

Residues Cys36, Cys39, Cys72, and Cys75 each contribute to the Zn(2+) site. A disordered region spans residues 41-72; sequence RPLNGVPRGRPSELRKLPKTKKRPERPYPNLC.

This sequence belongs to the eukaryotic ribosomal protein eL34 family. As to quaternary structure, part of the 50S ribosomal subunit. It depends on Zn(2+) as a cofactor.

This is Large ribosomal subunit protein eL34 from Thermococcus kodakarensis (strain ATCC BAA-918 / JCM 12380 / KOD1) (Pyrococcus kodakaraensis (strain KOD1)).